Consider the following 203-residue polypeptide: Bone marrow stromal antigen 2 (203 aa).

At 1-26 (MAPTFYHYHPLPMDQKEPGCGIRWRC) the chain is on the cytoplasmic side. The helical; Signal-anchor for type II membrane protein transmembrane segment at 27-47 (LAAASVLILVALVIPLIIFAV) threads the bilayer. The Extracellular segment spans residues 48 to 183 (KANSEACRDG…EASITSKQNS (136 aa)). Residues Asn66 and Asn93 are each glycosylated (N-linked (GlcNAc...) asparagine). Residues 66–178 (NTTRLLQRQL…LRTAEEASIT (113 aa)) are a coiled coil. Ser183 carries GPI-anchor amidated serine lipidation. A propeptide spans 184-203 (AGSMAVSSLLVLAVPLFLLF) (removed in mature form).

In terms of assembly, parallel homodimer; disulfide-linked. May form homotetramers under reducing conditions. Isoform 1 and isoform 2 form homodimers and also heterodimers with each other. Dimerization is essential for its antiviral activity. Interacts (via cytoplasmic domain) with ARHGAP44. Interacts with MMP14 (via C-terminal cytoplasmic tail). Interacts with LILRA4/ILT7. Interacts with RNF115. Post-translationally, the GPI anchor is essential for its antiviral activity.

Its subcellular location is the golgi apparatus. The protein localises to the trans-Golgi network. The protein resides in the cell membrane. It is found in the late endosome. It localises to the membrane raft. Its subcellular location is the cytoplasm. The protein localises to the apical cell membrane. Functionally, IFN-induced antiviral host restriction factor which efficiently blocks the release of diverse mammalian enveloped viruses by directly tethering nascent virions to the membranes of infected cells. Acts as a direct physical tether, holding virions to the cell membrane and linking virions to each other. The tethered virions can be internalized by endocytosis and subsequently degraded or they can remain on the cell surface. In either case, their spread as cell-free virions is restricted. Its target viruses belong to diverse families, including retroviridae: human immunodeficiency virus type 1 (HIV-1), mouse mammary tumor virus (MMTV) and murine leukemia virus (MLV), filoviridae: ebola virus (EBOV), arenaviridae: lassa virus (LASV), and rhabdoviridae: vesicular stomatitis virus (VSV). Can inhibit cell surface proteolytic activity of MMP14 causing decreased activation of MMP15 which results in inhibition of cell growth and migration. Can stimulate signaling by LILRA4/ILT7 and consequently provide negative feedback to the production of IFN by plasmacytoid dendritic cells in response to viral infection. Plays a role in the organization of the subapical actin cytoskeleton in polarized epithelial cells. This Cricetulus griseus (Chinese hamster) protein is Bone marrow stromal antigen 2 (Bst2).